Reading from the N-terminus, the 292-residue chain is tRNA-cytidine(32) 2-sulfurtransferase (292 aa).

The short motif at 62–67 (SGGKDS) is the PP-loop motif element. Cys-137, Cys-140, and Cys-228 together coordinate [4Fe-4S] cluster.

This sequence belongs to the TtcA family. In terms of assembly, homodimer. Requires Mg(2+) as cofactor. [4Fe-4S] cluster serves as cofactor.

The protein resides in the cytoplasm. It catalyses the reaction cytidine(32) in tRNA + S-sulfanyl-L-cysteinyl-[cysteine desulfurase] + AH2 + ATP = 2-thiocytidine(32) in tRNA + L-cysteinyl-[cysteine desulfurase] + A + AMP + diphosphate + H(+). It participates in tRNA modification. In terms of biological role, catalyzes the ATP-dependent 2-thiolation of cytidine in position 32 of tRNA, to form 2-thiocytidine (s(2)C32). The sulfur atoms are provided by the cysteine/cysteine desulfurase (IscS) system. In Brucella anthropi (strain ATCC 49188 / DSM 6882 / CCUG 24695 / JCM 21032 / LMG 3331 / NBRC 15819 / NCTC 12168 / Alc 37) (Ochrobactrum anthropi), this protein is tRNA-cytidine(32) 2-sulfurtransferase.